A 95-amino-acid chain; its full sequence is Aspartyl/glutamyl-tRNA(Asn/Gln) amidotransferase subunit C (95 aa).

This sequence belongs to the GatC family. Heterotrimer of A, B and C subunits.

It carries out the reaction L-glutamyl-tRNA(Gln) + L-glutamine + ATP + H2O = L-glutaminyl-tRNA(Gln) + L-glutamate + ADP + phosphate + H(+). The catalysed reaction is L-aspartyl-tRNA(Asn) + L-glutamine + ATP + H2O = L-asparaginyl-tRNA(Asn) + L-glutamate + ADP + phosphate + 2 H(+). In terms of biological role, allows the formation of correctly charged Asn-tRNA(Asn) or Gln-tRNA(Gln) through the transamidation of misacylated Asp-tRNA(Asn) or Glu-tRNA(Gln) in organisms which lack either or both of asparaginyl-tRNA or glutaminyl-tRNA synthetases. The reaction takes place in the presence of glutamine and ATP through an activated phospho-Asp-tRNA(Asn) or phospho-Glu-tRNA(Gln). In Rhizobium rhizogenes (strain K84 / ATCC BAA-868) (Agrobacterium radiobacter), this protein is Aspartyl/glutamyl-tRNA(Asn/Gln) amidotransferase subunit C.